A 130-amino-acid polypeptide reads, in one-letter code: Small ribosomal subunit protein uS8 (130 aa).

Belongs to the universal ribosomal protein uS8 family. In terms of assembly, part of the 30S ribosomal subunit. Contacts proteins S5 and S12.

Functionally, one of the primary rRNA binding proteins, it binds directly to 16S rRNA central domain where it helps coordinate assembly of the platform of the 30S subunit. The chain is Small ribosomal subunit protein uS8 from Aster yellows witches'-broom phytoplasma (strain AYWB).